The chain runs to 733 residues: Leucine-rich repeat neuronal protein 4 (733 aa).

The first 19 residues, 1–19 (MRWTLMLQLLQLLLQLLMA), serve as a signal peptide directing secretion. The Extracellular segment spans residues 20 to 676 (QSQSLERISQ…CATFTTKPSS (657 aa)). 10 LRR repeats span residues 62 to 82 (GVTT…CLPR), 83 to 106 (TLRS…GRLP), 107 to 128 (ELRV…RDTL), 130 to 151 (ELRE…AGPS), 154 to 175 (SLRS…TFAC), 178 to 199 (ALRL…AFAG), 207 to 230 (ALEL…RNLP), 231 to 253 (KLKS…IFKM), 256 to 278 (NLRQ…IFQD), and 281 to 302 (NLQV…NSSQ). N70 carries N-linked (GlcNAc...) asparagine glycosylation. N-linked (GlcNAc...) asparagine glycosylation occurs at N183. N291, N299, N327, N408, and N469 each carry an N-linked (GlcNAc...) asparagine glycan. The LRRCT domain occupies 311 to 364 (NPLICSCELAWLLVDVNKTVLHRAADTMCEPALGSTGPFSGPLSLSHLSNVCRS). The segment at 395–423 (STALSAQPGGSQQNITKVPSLTMTSPTQG) is disordered. The interval 480–518 (KYLEPLPTSPNPRSLPQTKQRTQATPRALHTDPPQDEIP) is disordered. Positions 490–504 (NPRSLPQTKQRTQAT) are enriched in polar residues. Positions 576–675 (TPDPPTLQGV…SCATFTTKPS (100 aa)) constitute a Fibronectin type-III domain. N619 is a glycosylation site (N-linked (GlcNAc...) asparagine). The chain crosses the membrane as a helical span at residues 677–697 (VVIFWGLCTASGLLLVSTLVL). At 698 to 733 (SVCLWRQRWKPHRQFYDTHLVAFKNPARAEEVTQWE) the chain is on the cytoplasmic side.

The protein localises to the membrane. Functionally, may play an important role in hippocampus-dependent long-lasting memory. In Mus musculus (Mouse), this protein is Leucine-rich repeat neuronal protein 4 (Lrrn4).